The following is a 233-amino-acid chain: Glycerol-3-phosphate acyltransferase 5 (233 aa).

5 consecutive transmembrane segments (helical) span residues 3 to 23, 69 to 89, 116 to 136, 143 to 163, and 168 to 188; these read LVFI…MAYL, MILL…VGLF, LVMA…FGLF, VFLG…FFGI, and TISW…LMAP.

It belongs to the PlsY family. As to quaternary structure, probably interacts with PlsX.

The protein localises to the cell membrane. It catalyses the reaction an acyl phosphate + sn-glycerol 3-phosphate = a 1-acyl-sn-glycero-3-phosphate + phosphate. The protein operates within lipid metabolism; phospholipid metabolism. In terms of biological role, catalyzes the transfer of an acyl group from acyl-phosphate (acyl-PO(4)) to glycerol-3-phosphate (G3P) to form lysophosphatidic acid (LPA). This enzyme utilizes acyl-phosphate as fatty acyl donor, but not acyl-CoA or acyl-ACP. The sequence is that of Glycerol-3-phosphate acyltransferase 5 from Dehalococcoides mccartyi (strain ATCC BAA-2266 / KCTC 15142 / 195) (Dehalococcoides ethenogenes (strain 195)).